We begin with the raw amino-acid sequence, 123 residues long: Protein Wnt-3a (123 aa).

Serine 1 carries O-palmitoleoyl serine lipidation. A disulfide bridge connects residues cysteine 89 and cysteine 104. The N-linked (GlcNAc...) asparagine glycan is linked to asparagine 90.

It belongs to the Wnt family. In terms of processing, disulfide bonds have critical and distinct roles in secretion and activity. Loss of each conserved cysteine results in high molecular weight oxidized Wnt oligomers, which are formed through inter-Wnt disulfide bonding. Palmitoleoylation is required for efficient binding to frizzled receptors. Depalmitoleoylation leads to Wnt signaling pathway inhibition.

The protein localises to the secreted. The protein resides in the extracellular space. Its subcellular location is the extracellular matrix. Ligand for members of the frizzled family of seven transmembrane receptors. Functions in the canonical Wnt signaling pathway that results in activation of transcription factors of the TCF/LEF family. Required for normal embryonic mesoderm development and formation of caudal somites. Required for normal morphogenesis of the developing neural tube. The polypeptide is Protein Wnt-3a (WNT-3A) (Pituophis melanoleucus (Pine snake)).